The primary structure comprises 336 residues: Inositol 2-dehydrogenase (336 aa).

This sequence belongs to the Gfo/Idh/MocA family. As to quaternary structure, homotetramer.

The catalysed reaction is myo-inositol + NAD(+) = scyllo-inosose + NADH + H(+). Its function is as follows. Involved in the oxidation of myo-inositol (MI) to 2-keto-myo-inositol (2KMI or 2-inosose). In Pseudomonas syringae pv. syringae (strain B728a), this protein is Inositol 2-dehydrogenase.